A 227-amino-acid polypeptide reads, in one-letter code: Cytochrome c oxidase subunit 2 (227 aa).

The Mitochondrial intermembrane segment spans residues 1-14 (MAYPFQLGLQDATS). A helical transmembrane segment spans residues 15 to 45 (PIMEELTNFHDHTLMIVFLISSLVLYLISLM). Residues 46–59 (LTTKLIHTNTMDAQ) lie on the Mitochondrial matrix side of the membrane. Residues 60–87 (EVETVWTILPAIILIMIALPSLRILYLM) form a helical membrane-spanning segment. Topologically, residues 88 to 227 (DEINNPVLTV…LFENWSTSMI (140 aa)) are mitochondrial intermembrane. Positions 161, 196, 198, 200, 204, and 207 each coordinate Cu cation. Position 198 (Glu-198) interacts with Mg(2+).

The protein belongs to the cytochrome c oxidase subunit 2 family. In terms of assembly, component of the cytochrome c oxidase (complex IV, CIV), a multisubunit enzyme composed of 14 subunits. The complex is composed of a catalytic core of 3 subunits MT-CO1, MT-CO2 and MT-CO3, encoded in the mitochondrial DNA, and 11 supernumerary subunits COX4I, COX5A, COX5B, COX6A, COX6B, COX6C, COX7A, COX7B, COX7C, COX8 and NDUFA4, which are encoded in the nuclear genome. The complex exists as a monomer or a dimer and forms supercomplexes (SCs) in the inner mitochondrial membrane with NADH-ubiquinone oxidoreductase (complex I, CI) and ubiquinol-cytochrome c oxidoreductase (cytochrome b-c1 complex, complex III, CIII), resulting in different assemblies (supercomplex SCI(1)III(2)IV(1) and megacomplex MCI(2)III(2)IV(2)). Found in a complex with TMEM177, COA6, COX18, COX20, SCO1 and SCO2. Interacts with TMEM177 in a COX20-dependent manner. Interacts with COX20. Interacts with COX16. Cu cation serves as cofactor.

The protein resides in the mitochondrion inner membrane. It carries out the reaction 4 Fe(II)-[cytochrome c] + O2 + 8 H(+)(in) = 4 Fe(III)-[cytochrome c] + 2 H2O + 4 H(+)(out). Functionally, component of the cytochrome c oxidase, the last enzyme in the mitochondrial electron transport chain which drives oxidative phosphorylation. The respiratory chain contains 3 multisubunit complexes succinate dehydrogenase (complex II, CII), ubiquinol-cytochrome c oxidoreductase (cytochrome b-c1 complex, complex III, CIII) and cytochrome c oxidase (complex IV, CIV), that cooperate to transfer electrons derived from NADH and succinate to molecular oxygen, creating an electrochemical gradient over the inner membrane that drives transmembrane transport and the ATP synthase. Cytochrome c oxidase is the component of the respiratory chain that catalyzes the reduction of oxygen to water. Electrons originating from reduced cytochrome c in the intermembrane space (IMS) are transferred via the dinuclear copper A center (CU(A)) of subunit 2 and heme A of subunit 1 to the active site in subunit 1, a binuclear center (BNC) formed by heme A3 and copper B (CU(B)). The BNC reduces molecular oxygen to 2 water molecules using 4 electrons from cytochrome c in the IMS and 4 protons from the mitochondrial matrix. This is Cytochrome c oxidase subunit 2 (MT-CO2) from Gerbillurus vallinus (Brush-tailed hairy-footed gerbil).